The primary structure comprises 1015 residues: Collagen alpha-2(I) chain (1015 aa).

The interval 1–1015 (SGGFDFSFLP…FGYEGDFYRA (1015 aa)) is disordered. 2 positions are modified to 4-hydroxyproline: P10 and P13. A compositionally biased stretch (gly residues) spans 20–30 (KGVGLGPGPMG). P38 bears the 4-hydroxyproline mark. A compositionally biased stretch (low complexity) spans 43-69 (QGPAGEPGEPGQTGPAGARGPAGPPGK). Residues 70–84 (AGEDGHPGKPGRPGE) are compositionally biased toward basic and acidic residues. K106 carries the 5-hydroxylysine; alternate modification. An O-linked (Gal...) hydroxylysine; alternate glycan is attached at K106. 3 stretches are compositionally biased toward low complexity: residues 140 to 169 (VGAP…SAGP), 194 to 208 (AGPR…VSGP), and 235 to 250 (PGPV…RGLV). The span at 302-311 (GLRGGPGSRG) shows a compositional bias: gly residues. Positions 324 to 340 (PAGSRGASGPAGVRGPS) are enriched in low complexity. A 4-hydroxyproline mark is found at P346 and P349. Gly residues predominate over residues 441-450 (GVQGGKGEQG). Residues 497–514 (PGESGAAGPVGPIGSRGP) are compositionally biased toward low complexity. Gly residues predominate over residues 534–545 (GTAGPGSGGLPG). Composition is skewed to low complexity over residues 568–612 (VGTT…PRGS) and 619–639 (VGPA…QPGA). The span at 640-649 (KGERGTKGPK) shows a compositional bias: basic and acidic residues. Residues 657–670 (PTGPVGAAGPSGPN) show a composition bias toward low complexity. Residues 674 to 686 (GPAGGRGDGGPPG) show a composition bias toward gly residues. Low complexity predominate over residues 687–697 (LTGFPGAAGRT). Positions 734 to 743 (GETGAGGPPG) are enriched in gly residues. Composition is skewed to low complexity over residues 751 to 778 (SGEP…LGLP), 786 to 799 (LPGV…PGPL), 846 to 868 (YAGN…VGPA), and 877 to 897 (PGPA…PSGP). The span at 901 to 912 (RGDKGEAGDKGP) shows a compositional bias: basic and acidic residues. Positions 987–997 (PAGPPGPPGPP) are enriched in pro residues.

This sequence belongs to the fibrillar collagen family. In terms of assembly, trimers of one alpha 2(I) and two alpha 1(I) chains. Interacts (via C-terminus) with TMEM131 (via PapD-L domain); the interaction is direct and is involved in assembly and TRAPPIII ER-to-Golgi transport complex-dependent secretion of collagen. Prolines at the third position of the tripeptide repeating unit (G-X-Y) are hydroxylated in some or all of the chains. As to expression, expressed in bones.

The protein localises to the secreted. The protein resides in the extracellular space. Its subcellular location is the extracellular matrix. Type I collagen is a member of group I collagen (fibrillar forming collagen). This chain is Collagen alpha-2(I) chain, found in Doedicurus sp. (South American giant glyptodont).